A 430-amino-acid chain; its full sequence is uncharacterized protein (430 aa).

12 helical membrane-spanning segments follow: residues 36-56 (LFVV…GVTV), 69-89 (AFAG…ALIV), 100-122 (TGLS…AAII), 126-148 (FLLF…ARYA), 160-180 (TAVS…PSLV), 197-217 (GPFI…FIML), 253-273 (IIVG…IMTM), 285-305 (LGAV…PSLV), 317-337 (AMAI…AFAP), 340-360 (SMIL…FGLI), 384-404 (VLIA…VAGS), and 406-426 (YLAL…VVVW).

It belongs to the major facilitator superfamily.

Its subcellular location is the cell membrane. This is an uncharacterized protein from Bacillus subtilis (strain 168).